The following is a 40-amino-acid chain: Toxin CSTX-17 (40 aa).

4 disulfides stabilise this stretch: Cys2/Cys17, Cys9/Cys22, Cys16/Cys33, and Cys24/Cys31. Residue Trp40 is modified to Tryptophan amide.

In terms of processing, contains 4 disulfide bonds. Expressed by the venom gland.

It localises to the secreted. The protein is Toxin CSTX-17 of Cupiennius salei (American wandering spider).